The primary structure comprises 239 residues: Putative GEM-like protein 3 (239 aa).

The disordered stretch occupies residues 29–68; the sequence is HWNPELVSESPAPDEKALSSSSAARSNPYVARAPTETSDA. A GRAM domain is found at 128-191; sequence KIFRQTFETV…HQLKSVNPSI (64 aa).

It belongs to the GEM family.

In Arabidopsis thaliana (Mouse-ear cress), this protein is Putative GEM-like protein 3.